The sequence spans 302 residues: Beta-1,2-mannobiose phosphorylase (302 aa).

Belongs to the glycosyl hydrolase 130 family. As to quaternary structure, monomer.

The catalysed reaction is beta-D-mannopyranosyl-(1-&gt;2)-D-mannopyranose + phosphate = alpha-D-mannose 1-phosphate + D-mannose. It participates in nucleotide-sugar biosynthesis; GDP-alpha-D-mannose biosynthesis. In terms of biological role, probably involved in a salvage pathway for GDP-D-mannose biosynthesis. Catalyzes the reversible phosphorolysis of 1,2-beta-oligomannan. In phosphorolytic reactions, prefers beta-1,2-mannobiose (beta-1,2-Man2) as substrate. Produces alpha-D-mannose 1-phosphate, which is the precursor of GDP-D-mannose. In Thermoanaerobacter sp. (strain X514), this protein is Beta-1,2-mannobiose phosphorylase.